The primary structure comprises 512 residues: MKKQHDTIIVLDFGSQYNQLIARRIREFGVYSELHPHTITAEEIKAMNPKGIIFSGGPNSVYGEGALHCDEKIFELGLPIFGICYGMQLMTQHFGGKVERANHREYGKAVLKVENESKLYANLPEEQVVWMSHGDLVTGLPEGFVVDATSESCPIAGMSNEGENLYGVQFHPEVRHSEHGNDLIKNFVFGVCGCSEGWNMENFIEVELEKIRETVGDKKVLCALSGGVDSSVVAVLIHKAIGDQLTCIFVDHGLLRKDEAEGVMKTFSEGFHMNVIKVDAQERFMNKLKGVEDPEQKRKIIGNEFIYVFDDEASKLQGMDFLAQGTLYTDIVESGTATAQTIKSHHNVGGLPEDMQFKLIEPLNTLFKDEVRVLGSELGIPDEIVWRQPFPGPGLGIRVLGEITEEKLEIVRESDAILREEIIKAGLDREVWQYFTALPGMRSVGVMGDERTYDYTVGIRAVTSIDGMTADWARIPWDVLEKISVRIVNEVKHVNRIVYDITSKPPATIEWE.

In terms of domain architecture, Glutamine amidotransferase type-1 spans 7–197; sequence TIIVLDFGSQ…VFGVCGCSEG (191 aa). Catalysis depends on C84, which acts as the Nucleophile. Residues H171 and E173 contribute to the active site. Residues 198-387 form the GMPS ATP-PPase domain; that stretch reads WNMENFIEVE…LGIPDEIVWR (190 aa). 225 to 231 lines the ATP pocket; that stretch reads SGGVDSS.

Homodimer.

It catalyses the reaction XMP + L-glutamine + ATP + H2O = GMP + L-glutamate + AMP + diphosphate + 2 H(+). It participates in purine metabolism; GMP biosynthesis; GMP from XMP (L-Gln route): step 1/1. Catalyzes the synthesis of GMP from XMP. This chain is GMP synthase [glutamine-hydrolyzing], found in Bacillus mycoides (strain KBAB4) (Bacillus weihenstephanensis).